A 242-amino-acid chain; its full sequence is Uridylate kinase (242 aa).

12–15 serves as a coordination point for ATP; the sequence is KLSG. The tract at residues 20 to 25 is involved in allosteric activation by GTP; sequence GNDGFG. Residue G54 participates in UMP binding. Residues G55 and R59 each contribute to the ATP site. UMP contacts are provided by residues D74 and 135-142; that span reads TGNPYFST. 3 residues coordinate ATP: N163, Y169, and D172.

It belongs to the UMP kinase family. Homohexamer.

Its subcellular location is the cytoplasm. It carries out the reaction UMP + ATP = UDP + ADP. The protein operates within pyrimidine metabolism; CTP biosynthesis via de novo pathway; UDP from UMP (UMPK route): step 1/1. Its activity is regulated as follows. Allosterically activated by GTP. Inhibited by UTP. In terms of biological role, catalyzes the reversible phosphorylation of UMP to UDP. The polypeptide is Uridylate kinase (Listeria innocua serovar 6a (strain ATCC BAA-680 / CLIP 11262)).